Here is a 123-residue protein sequence, read N- to C-terminus: Beta-2-microglobulin (123 aa).

A signal peptide spans 1–21 (MSRLFLFALLGHLCFLPYLDA). Residues 29 to 118 (PRVQVYSRYP…STLNEPKVVK (90 aa)) form the Ig-like C1-type domain. Cys49 and Cys104 form a disulfide bridge.

The protein belongs to the beta-2-microglobulin family. In terms of assembly, heterodimer of an alpha chain and a beta chain. Beta-2-microglobulin is the beta-chain of major histocompatibility complex class I molecules.

Its subcellular location is the secreted. Its function is as follows. Component of the class I major histocompatibility complex (MHC). Involved in the presentation of peptide antigens to the immune system. This chain is Beta-2-microglobulin (B2M), found in Monodelphis domestica (Gray short-tailed opossum).